The following is a 264-amino-acid chain: Virulence plasmid protein pGP3-D (264 aa).

This chain is Virulence plasmid protein pGP3-D, found in Chlamydia muridarum (strain MoPn / Nigg).